We begin with the raw amino-acid sequence, 441 residues long: Ribosomal protein uS12 methylthiotransferase RimO (441 aa).

The MTTase N-terminal domain maps to 7-117 (PKISFVSLGC…VLDAVHRAKP (111 aa)). [4Fe-4S] cluster-binding residues include C16, C52, C81, C148, C152, and C155. The Radical SAM core domain occupies 134–371 (LTPRHYAYLK…MARQQAISAR (238 aa)). A TRAM domain is found at 374–440 (KRKVGTRQQI…AYDLHGTVAG (67 aa)).

It belongs to the methylthiotransferase family. RimO subfamily. [4Fe-4S] cluster is required as a cofactor.

The protein resides in the cytoplasm. It carries out the reaction L-aspartate(89)-[ribosomal protein uS12]-hydrogen + (sulfur carrier)-SH + AH2 + 2 S-adenosyl-L-methionine = 3-methylsulfanyl-L-aspartate(89)-[ribosomal protein uS12]-hydrogen + (sulfur carrier)-H + 5'-deoxyadenosine + L-methionine + A + S-adenosyl-L-homocysteine + 2 H(+). Functionally, catalyzes the methylthiolation of an aspartic acid residue of ribosomal protein uS12. This is Ribosomal protein uS12 methylthiotransferase RimO from Rhodopseudomonas palustris (strain HaA2).